Here is a 210-residue protein sequence, read N- to C-terminus: Uracil phosphoribosyltransferase (210 aa).

Residues arginine 77, arginine 102, and 129-137 (DPMLATGAS) contribute to the 5-phospho-alpha-D-ribose 1-diphosphate site. Uracil contacts are provided by residues isoleucine 195 and 200-202 (GDA). Aspartate 201 serves as a coordination point for 5-phospho-alpha-D-ribose 1-diphosphate.

It belongs to the UPRTase family. Requires Mg(2+) as cofactor.

The catalysed reaction is UMP + diphosphate = 5-phospho-alpha-D-ribose 1-diphosphate + uracil. Its pathway is pyrimidine metabolism; UMP biosynthesis via salvage pathway; UMP from uracil: step 1/1. Allosterically activated by GTP. Catalyzes the conversion of uracil and 5-phospho-alpha-D-ribose 1-diphosphate (PRPP) to UMP and diphosphate. The protein is Uracil phosphoribosyltransferase of Mycoplasmoides gallisepticum (strain R(low / passage 15 / clone 2)) (Mycoplasma gallisepticum).